The primary structure comprises 228 residues: L-ribulose-5-phosphate 4-epimerase UlaF (228 aa).

Substrate is bound by residues 26-27 (GN), 43-44 (SG), and 72-73 (SS). Asp-74, His-93, and His-95 together coordinate Zn(2+). Asp-118 acts as the Proton donor/acceptor in catalysis. His-167 provides a ligand contact to Zn(2+). Tyr-225 serves as the catalytic Proton donor/acceptor.

Belongs to the aldolase class II family. AraD/FucA subfamily. Requires Zn(2+) as cofactor.

The catalysed reaction is L-ribulose 5-phosphate = D-xylulose 5-phosphate. It functions in the pathway cofactor degradation; L-ascorbate degradation; D-xylulose 5-phosphate from L-ascorbate: step 4/4. Its function is as follows. Catalyzes the isomerization of L-ribulose 5-phosphate to D-xylulose 5-phosphate. Is involved in the anaerobic L-ascorbate utilization. This is L-ribulose-5-phosphate 4-epimerase UlaF from Escherichia fergusonii (strain ATCC 35469 / DSM 13698 / CCUG 18766 / IAM 14443 / JCM 21226 / LMG 7866 / NBRC 102419 / NCTC 12128 / CDC 0568-73).